We begin with the raw amino-acid sequence, 939 residues long: Zinc finger RNA-binding protein 2 (939 aa).

Disordered regions lie at residues 1-72 (MATS…AYGS), 116-185 (GRMT…IVTS), 217-264 (FYPP…PKAG), 289-314 (HLGG…SPRG), 360-389 (LEPA…ASSR), 401-449 (ALCE…DAQP), 545-590 (RLEE…SSDD), and 906-939 (RLGA…EGLV). Composition is skewed to polar residues over residues 137-147 (PHGSHSHAQPP) and 157-184 (QPAS…SIVT). Residues 217-239 (FYPPAQPPPPPGPPQQLPPPPAP) are compositionally biased toward pro residues. The stretch at 516–549 (KVLEERMRKQRHLAEERLEQLRRWHAERRRLEEE) forms a coiled coil. The DZF domain maps to 570–935 (RPESPASAPL…GEKKRGRRGG (366 aa)). The span at 906–916 (RLGARFRKRQR) shows a compositional bias: basic residues.

The polypeptide is Zinc finger RNA-binding protein 2 (ZFR2) (Homo sapiens (Human)).